Reading from the N-terminus, the 688-residue chain is MTAQNFLAEIGTEELPPKALKKLATAFAENVEQELNQAGLAFEKVEWFAAPRRLAVKVLGLAEAQPSKQVEKRGPAVSAAFDAEGKPTKAAEGWARGCGITVEQAERLATDKGEWLVHRAVIEGQPTKNLLVGIIDKALAGLPIPKTMRWGDKTEQFVRPVHTVTLLFGADLIEGEILGVASGRTVRGHRFLGEREFSLDHADQYPQLLKERGSVVADFNERKALILATSQEKATALGGVADIEEELLEEVTSLVEYPNVLTAKFEERFLAVPAEALVYTMKGDQKYFPIYDKDGKLLPHFIFVSNINPDDPSKIIEGNEKVVRPRLTDAEFFFKTDLKQKLEDRLPRLETVLFQQQLGTLRDKTARIEALAGEIAAQIGADQTKAKRAGLLSKCDLMTNMVFEFTDTQGVMGMHYARHDGEDEDVAVALNEQYMPRFAGDTLPNSLVACSVALADKIDTLTGIFGIGQSPKGSADPFALRRAALGCLRIIVEKNLPLDLVDIVAKATALFGDKLTNKNVVDEVVDFMLGRFRAWYESEGIAVDVIQSVLARRPTKPADFDARVRAVSHFRTLDSAEALAAANKRVSNILAKADIAIGEIDLGVCVESAEKTLAEAVIALKGEVQPLIAQGDYTAVLDKLANLRQPIDAFFDGVMVNVEEQTLRQNRLAILSTLQNLFLQVADISVLQ.

This sequence belongs to the class-II aminoacyl-tRNA synthetase family. In terms of assembly, tetramer of two alpha and two beta subunits.

It is found in the cytoplasm. The catalysed reaction is tRNA(Gly) + glycine + ATP = glycyl-tRNA(Gly) + AMP + diphosphate. The sequence is that of Glycine--tRNA ligase beta subunit from Histophilus somni (strain 2336) (Haemophilus somnus).